We begin with the raw amino-acid sequence, 89 residues long: Small ribosomal subunit protein bS20 (89 aa).

Basic residues-rich tracts occupy residues 1–10 (MANIKSKIKS) and 17–29 (ARKR…SRVK). Residues 1-29 (MANIKSKIKSIKTMEKARKRNSMIKSRVK) are disordered.

This sequence belongs to the bacterial ribosomal protein bS20 family.

In terms of biological role, binds directly to 16S ribosomal RNA. The polypeptide is Small ribosomal subunit protein bS20 (Mycoplasmopsis pulmonis (strain UAB CTIP) (Mycoplasma pulmonis)).